A 162-amino-acid polypeptide reads, in one-letter code: Nucleotide-binding protein ACIAD3137 (162 aa).

The protein belongs to the YajQ family.

Nucleotide-binding protein. The chain is Nucleotide-binding protein ACIAD3137 from Acinetobacter baylyi (strain ATCC 33305 / BD413 / ADP1).